The chain runs to 338 residues: Extracellular globin (338 aa).

The signal sequence occupies residues 1–18; it reads MRSLLLLSIVFFVVTVSA. N-linked (GlcNAc...) asparagine glycosylation is present at Asn19. Globin domains are found at residues 25-167 and 174-316; these read CMKS…KHGR and CMRS…RHGK. Residues Gln82 and His114 each coordinate heme b. The N-linked (GlcNAc...) asparagine glycan is linked to Asn216. Positions 231 and 263 each coordinate heme b. The disordered stretch occupies residues 313-338; that stretch reads RHGKEHHEHKEEHKEEHKEEHKEEQH.

It belongs to the globin family. As to quaternary structure, homooctamer.

The protein resides in the secreted. It is found in the extracellular space. Has an extremely high oxygen affinity. In a vacuum, it takes several minutes to release its oxygen compared to milliseconds for a normal globin. Could be used as an oxygen scavenger for sterol biosynthesis. This is Extracellular globin from Ascaris suum (Pig roundworm).